The following is a 339-amino-acid chain: 2-deoxy-scyllo-inosamine dehydrogenase (339 aa).

Residues Cys-37, His-59, Cys-88, Cys-91, Cys-94, Cys-102, and Glu-143 each contribute to the Zn(2+) site.

It belongs to the zinc-containing alcohol dehydrogenase family. DOIA dehydrogenase subfamily. The cofactor is Zn(2+).

It carries out the reaction 2-deoxy-scyllo-inosamine + NADP(+) = 3-amino-2,3-dideoxy-scyllo-inosose + NADPH + H(+). The enzyme catalyses 2-deoxy-scyllo-inosamine + NAD(+) = 3-amino-2,3-dideoxy-scyllo-inosose + NADH + H(+). The protein operates within metabolic intermediate biosynthesis; 2-deoxystreptamine biosynthesis; 2-deoxystreptamine from D-glucose 6-phosphate: step 3/4. It functions in the pathway antibiotic biosynthesis; tobramycin biosynthesis. Catalyzes the oxidation of 2-deoxy-scyllo-inosamine (DOIA) with NAD(+) or NADP(+), forming 3-amino-2,3-dideoxy-scyllo-inosose (amino-DOI). The sequence is that of 2-deoxy-scyllo-inosamine dehydrogenase (tobE) from Streptoalloteichus tenebrarius (strain ATCC 17920 / DSM 40477 / JCM 4838 / CBS 697.72 / NBRC 16177 / NCIMB 11028 / NRRL B-12390 / A12253. 1 / ISP 5477) (Streptomyces tenebrarius).